A 273-amino-acid chain; its full sequence is Large ribosomal subunit protein uL2 (273 aa).

2 disordered regions span residues 28–54 and 221–273; these read KPYA…TRHI and RGTA…RRTK. The segment covering 39-48 has biased composition (low complexity); sequence KSGGRNNNGR.

The protein belongs to the universal ribosomal protein uL2 family. As to quaternary structure, part of the 50S ribosomal subunit. Forms a bridge to the 30S subunit in the 70S ribosome.

In terms of biological role, one of the primary rRNA binding proteins. Required for association of the 30S and 50S subunits to form the 70S ribosome, for tRNA binding and peptide bond formation. It has been suggested to have peptidyltransferase activity; this is somewhat controversial. Makes several contacts with the 16S rRNA in the 70S ribosome. The sequence is that of Large ribosomal subunit protein uL2 from Pectobacterium carotovorum subsp. carotovorum (strain PC1).